The sequence spans 888 residues: E3 ubiquitin-protein ligase SH3RF1 (888 aa).

An RING-type zinc finger spans residues 12–53; it reads CPVCLERLDASAKVLPCQHTFCKRCLLGIVGSRNELRCPECR. Residues 108–127 show a composition bias toward polar residues; sequence SSKDLQSSQGGQQPRVQSWS. The interval 108–128 is disordered; that stretch reads SSKDLQSSQGGQQPRVQSWSP. 2 SH3 domains span residues 134–193 and 196–259; these read PQLP…IIKP and QPPP…FNSA. The disordered stretch occupies residues 275 to 321; it reads DAGECSSAAAQSSTAPKHSDTKKNTKKRHSFTSLTMANKSSQASQNR. The interval 292 to 362 is interaction with RAC1; that stretch reads HSDTKKNTKK…APSQVHISTT (71 aa). Residue Ser304 is modified to Phosphoserine. Residues 305–321 show a composition bias toward polar residues; sequence FTSLTMANKSSQASQNR. The interval 440–543 is interaction with AKT2; the sequence is HLRPQTRPSV…STAGGPAQKL (104 aa). The 62-residue stretch at 445–506 folds into the SH3 3 domain; the sequence is TRPSVYVAIY…PGNYVAPVTR (62 aa). Disordered stretches follow at residues 516-548, 620-639, and 684-741; these read VPMS…GNGV, SVGL…LMPG, and TVLP…ASPT. Polar residues predominate over residues 520-535; it reads TAGQTSRGVTMVSPST. The residue at position 532 (Ser532) is a Phosphoserine. The segment covering 692 to 704 has biased composition (polar residues); it reads SPDSASSACGNSS. Basic and acidic residues predominate over residues 707–718; that stretch reads KPDKDSKKEKKG. A Phosphoserine modification is found at Ser735. The SH3 4 domain maps to 829 to 888; the sequence is VVCERHRVVVSYPPQSEAELELKEGDIVFVHKKREDGWFKGTLQRNGKTGLFPGSFVENI.

The protein belongs to the SH3RF family. As to quaternary structure, interacts with RAC1; in a GTP-dependent manner. Interacts with MAP3K10/MLK2 and MAP3K11/MLK3. Interacts with MAPK8IP; this interaction leads to the PJAC complex (POSH-JIP or SH3RF1/MAPK8IP apoptotic complex) with a 1:1 ratio. Interacts with SIAH1. Interacts with HERP1. Probably part of a signaling complex that may contain SH3RF1, MAPK8IP, DLK1, MAP2K4/MKK4, MAP2K7/MKK7, MAPK8/JNK1, MAPK9/JNK2, AKT1 and AKT2. Found in a complex with RAC2, MAP3K7/TAK1, MAP2K7/MKK7, MAPK8IP1/JIP1, MAPK8/JNK1 and MAPK9/JNK2. Found in a complex with RAC1, MAP3K11/MLK3, MAP2K7/MKK7, MAPK8IP1/JIP1 and MAPK8/JNK1. Interacts with SH3RF2. In terms of processing, phosphorylated at Ser-304 by AKT1 and AKT2. When phosphorylated, it has reduced ability to bind Rac. Post-translationally, autoubiquitinated. Ubiquitinated by SH3RF2, leading to proteasome-mediated degradation.

Its subcellular location is the cytoplasm. It is found in the perinuclear region. The protein resides in the cell projection. The protein localises to the lamellipodium. It localises to the golgi apparatus. Its subcellular location is the trans-Golgi network. It carries out the reaction S-ubiquitinyl-[E2 ubiquitin-conjugating enzyme]-L-cysteine + [acceptor protein]-L-lysine = [E2 ubiquitin-conjugating enzyme]-L-cysteine + N(6)-ubiquitinyl-[acceptor protein]-L-lysine.. It functions in the pathway protein modification; protein ubiquitination. Its function is as follows. Has E3 ubiquitin-protein ligase activity. In the absence of an external substrate, it can catalyze self-ubiquitination. Stimulates ubiquitination of potassium channel KCNJ1, enhancing it's dynamin-dependent and clathrin-independent endocytosis. Acts as a scaffold protein that coordinates with MAPK8IP1/JIP1 in organizing different components of the JNK pathway, including RAC1 or RAC2, MAP3K11/MLK3 or MAP3K7/TAK1, MAP2K7/MKK7, MAPK8/JNK1 and/or MAPK9/JNK2 into a functional multiprotein complex to ensure the effective activation of the JNK signaling pathway. Regulates the differentiation of CD4(+) and CD8(+) T-cells and promotes T-helper 1 (Th1) cell differentiation. Regulates the activation of MAPK8/JNK1 and MAPK9/JNK2 in CD4(+) T-cells and the activation of MAPK8/JNK1 in CD8(+) T-cells. Plays a crucial role in the migration of neocortical neurons in the developing brain. Controls proper cortical neuronal migration and the formation of proximal cytoplasmic dilation in the leading process (PCDLP) in migratory neocortical neurons by regulating the proper localization of activated RAC1 and F-actin assembly. Functionally, (Microbial infection) Plays an essential role in the targeting of HIV-1 Gag to the plasma membrane, this function is dependent on it's RING domain, and hence it's E3 ligase activity. The sequence is that of E3 ubiquitin-protein ligase SH3RF1 (SH3RF1) from Homo sapiens (Human).